The chain runs to 107 residues: Nucleoid-associated protein mlr5504 (107 aa).

This sequence belongs to the YbaB/EbfC family. As to quaternary structure, homodimer.

It localises to the cytoplasm. It is found in the nucleoid. In terms of biological role, binds to DNA and alters its conformation. May be involved in regulation of gene expression, nucleoid organization and DNA protection. This chain is Nucleoid-associated protein mlr5504, found in Mesorhizobium japonicum (strain LMG 29417 / CECT 9101 / MAFF 303099) (Mesorhizobium loti (strain MAFF 303099)).